A 477-amino-acid polypeptide reads, in one-letter code: Aspartyl/glutamyl-tRNA(Asn/Gln) amidotransferase subunit B (477 aa).

It belongs to the GatB/GatE family. GatB subfamily. Heterotrimer of A, B and C subunits.

The enzyme catalyses L-glutamyl-tRNA(Gln) + L-glutamine + ATP + H2O = L-glutaminyl-tRNA(Gln) + L-glutamate + ADP + phosphate + H(+). It catalyses the reaction L-aspartyl-tRNA(Asn) + L-glutamine + ATP + H2O = L-asparaginyl-tRNA(Asn) + L-glutamate + ADP + phosphate + 2 H(+). Its function is as follows. Allows the formation of correctly charged Asn-tRNA(Asn) or Gln-tRNA(Gln) through the transamidation of misacylated Asp-tRNA(Asn) or Glu-tRNA(Gln) in organisms which lack either or both of asparaginyl-tRNA or glutaminyl-tRNA synthetases. The reaction takes place in the presence of glutamine and ATP through an activated phospho-Asp-tRNA(Asn) or phospho-Glu-tRNA(Gln). This chain is Aspartyl/glutamyl-tRNA(Asn/Gln) amidotransferase subunit B, found in Lactococcus lactis subsp. cremoris (strain SK11).